Here is a 65-residue protein sequence, read N- to C-terminus: Large ribosomal subunit protein bL35 (65 aa).

It belongs to the bacterial ribosomal protein bL35 family.

The polypeptide is Large ribosomal subunit protein bL35 (Thermotoga maritima (strain ATCC 43589 / DSM 3109 / JCM 10099 / NBRC 100826 / MSB8)).